A 155-amino-acid polypeptide reads, in one-letter code: Large ribosomal subunit protein uL22 (155 aa).

Positions 109–155 (HITVIVESRPPKKAGKQGASASAARARRAQASKAATKKATDSKEGSE) are disordered. Residues 146–155 (KATDSKEGSE) are compositionally biased toward basic and acidic residues.

It belongs to the universal ribosomal protein uL22 family. As to quaternary structure, part of the 50S ribosomal subunit.

This protein binds specifically to 23S rRNA; its binding is stimulated by other ribosomal proteins, e.g. L4, L17, and L20. It is important during the early stages of 50S assembly. It makes multiple contacts with different domains of the 23S rRNA in the assembled 50S subunit and ribosome. In terms of biological role, the globular domain of the protein is located near the polypeptide exit tunnel on the outside of the subunit, while an extended beta-hairpin is found that lines the wall of the exit tunnel in the center of the 70S ribosome. The sequence is that of Large ribosomal subunit protein uL22 from Mycolicibacterium vanbaalenii (strain DSM 7251 / JCM 13017 / BCRC 16820 / KCTC 9966 / NRRL B-24157 / PYR-1) (Mycobacterium vanbaalenii).